Consider the following 218-residue polypeptide: Pyridoxine/pyridoxamine 5'-phosphate oxidase (218 aa).

Substrate contacts are provided by residues 14–17 and Lys-72; that span reads RREY. FMN contacts are provided by residues 67–72, 82–83, Arg-88, Lys-89, and Gln-111; these read RIVLLK and YT. Residues Tyr-129, Arg-133, and Ser-137 each contribute to the substrate site. Residues 146–147 and Trp-191 contribute to the FMN site; that span reads QS. 197-199 is a substrate binding site; it reads RLH. Arg-201 is an FMN binding site.

It belongs to the pyridoxamine 5'-phosphate oxidase family. In terms of assembly, homodimer. Requires FMN as cofactor.

The catalysed reaction is pyridoxamine 5'-phosphate + O2 + H2O = pyridoxal 5'-phosphate + H2O2 + NH4(+). It carries out the reaction pyridoxine 5'-phosphate + O2 = pyridoxal 5'-phosphate + H2O2. Its pathway is cofactor metabolism; pyridoxal 5'-phosphate salvage; pyridoxal 5'-phosphate from pyridoxamine 5'-phosphate: step 1/1. It functions in the pathway cofactor metabolism; pyridoxal 5'-phosphate salvage; pyridoxal 5'-phosphate from pyridoxine 5'-phosphate: step 1/1. In terms of biological role, catalyzes the oxidation of either pyridoxine 5'-phosphate (PNP) or pyridoxamine 5'-phosphate (PMP) into pyridoxal 5'-phosphate (PLP). The chain is Pyridoxine/pyridoxamine 5'-phosphate oxidase from Escherichia coli (strain 55989 / EAEC).